We begin with the raw amino-acid sequence, 331 residues long: 2-keto-3-deoxygluconate permease (331 aa).

The next 10 membrane-spanning stretches (helical) occupy residues 10 to 30 (IPGGMMLVPLVLGAILNTLAP), 42 to 62 (GMISGTVPILAVWFFCIGASI), 77 to 97 (LVLTKIAVAWVVAMGCAMFIP), 100 to 120 (GIQTGFFAGLSVLAIVSAMDM), 141 to 161 (AFVLMSLESGPLVTMLILGSA), 163 to 183 (LASFEPHHFVGAVLPFLIGFA), 200 to 220 (PVLIPFFGFALGNTINLNVIM), 224 to 244 (LLGIVLGVAVIIITGIPLIIA), 254 to 274 (TAGVAASSAAGAAVANPMIIA), and 289 to 309 (ALVAASVIVTAILVPIITALY).

Belongs to the KdgT transporter family.

It localises to the cell inner membrane. The catalysed reaction is 2-dehydro-3-deoxy-D-gluconate(in) + H(+)(in) = 2-dehydro-3-deoxy-D-gluconate(out) + H(+)(out). Functionally, catalyzes the proton-dependent uptake of 2-keto-3-deoxygluconate (KDG) into the cell. The polypeptide is 2-keto-3-deoxygluconate permease (Enterobacter sp. (strain 638)).